The chain runs to 136 residues: Large ribosomal subunit protein bL19 (136 aa).

The segment at M1–T23 is disordered. Acidic residues predominate over residues E12–T23.

This sequence belongs to the bacterial ribosomal protein bL19 family.

In terms of biological role, this protein is located at the 30S-50S ribosomal subunit interface and may play a role in the structure and function of the aminoacyl-tRNA binding site. This is Large ribosomal subunit protein bL19 from Dehalococcoides mccartyi (strain ATCC BAA-2266 / KCTC 15142 / 195) (Dehalococcoides ethenogenes (strain 195)).